The following is a 153-amino-acid chain: MTDPVPPRIAIVVSQFNPEVTDGLLKGALDHLAAQGAPVAAPDIIAAPGAYELPLIAQTLARTGRYAGVVCLGCVIKGETAHFEFISLGASLGLMAAGLQTETPVSFGVLTTYTDEQAVARSRDDAENKGREAANACLSTVQTLRRIRENALA.

5-amino-6-(D-ribitylamino)uracil contacts are provided by residues Phe-16, 50 to 52 (AYE), and 74 to 76 (CVI). 79–80 (ET) contacts (2S)-2-hydroxy-3-oxobutyl phosphate. The active-site Proton donor is the His-82. A 5-amino-6-(D-ribitylamino)uracil-binding site is contributed by Phe-107. Residue Arg-121 participates in (2S)-2-hydroxy-3-oxobutyl phosphate binding.

It belongs to the DMRL synthase family.

The catalysed reaction is (2S)-2-hydroxy-3-oxobutyl phosphate + 5-amino-6-(D-ribitylamino)uracil = 6,7-dimethyl-8-(1-D-ribityl)lumazine + phosphate + 2 H2O + H(+). It participates in cofactor biosynthesis; riboflavin biosynthesis; riboflavin from 2-hydroxy-3-oxobutyl phosphate and 5-amino-6-(D-ribitylamino)uracil: step 1/2. In terms of biological role, catalyzes the formation of 6,7-dimethyl-8-ribityllumazine by condensation of 5-amino-6-(D-ribitylamino)uracil with 3,4-dihydroxy-2-butanone 4-phosphate. This is the penultimate step in the biosynthesis of riboflavin. In Caulobacter vibrioides (strain ATCC 19089 / CIP 103742 / CB 15) (Caulobacter crescentus), this protein is 6,7-dimethyl-8-ribityllumazine synthase 1.